The primary structure comprises 441 residues: Chromatin structure-remodeling complex subunit SFH1 (441 aa).

Acidic residues predominate over residues 124–137; it reads DFDANDFEDDDDDD. 2 disordered regions span residues 124-183 and 383-407; these read DFDA…AAPP and EMTP…KRES. 2 stretches are compositionally biased toward basic and acidic residues: residues 138–147 and 155–166; these read QSQRESRDGS and DGTKKEEQDKFA.

It belongs to the SNF5 family.

It is found in the nucleus. Its function is as follows. Part of the chromatin structure-remodeling complex (RSC) which is involved in transcription regulation and nucleosome positioning. RSC is responsible for the transfer of a histone octamer from a nucleosome core particle to naked DNA. The reaction requires ATP and involves an activated RSC-nucleosome intermediate. Remodeling reaction also involves DNA translocation, DNA twist and conformational change. As a reconfigurer of centromeric and flanking nucleosomes, RSC complex is required both for proper kinetochore function in chromosome segregation and, via a PKC1-dependent signaling pathway, for organization of the cellular cytoskeleton. This subunit is essential for mitotic growth and required for cell cycle progression. This chain is Chromatin structure-remodeling complex subunit SFH1 (SFH1), found in Yarrowia lipolytica (strain CLIB 122 / E 150) (Yeast).